The chain runs to 424 residues: Tyrosine--tRNA ligase (424 aa).

Tyr-37 contacts L-tyrosine. Residues Pro-42–His-51 carry the 'HIGH' region motif. Positions 175 and 179 each coordinate L-tyrosine. Residues Lys-235 to Thr-239 carry the 'KMSKS' region motif. Lys-238 is a binding site for ATP. One can recognise an S4 RNA-binding domain in the interval Ala-357 to Gly-414.

Belongs to the class-I aminoacyl-tRNA synthetase family. TyrS type 1 subfamily. In terms of assembly, homodimer.

The protein localises to the cytoplasm. It carries out the reaction tRNA(Tyr) + L-tyrosine + ATP = L-tyrosyl-tRNA(Tyr) + AMP + diphosphate + H(+). In terms of biological role, catalyzes the attachment of tyrosine to tRNA(Tyr) in a two-step reaction: tyrosine is first activated by ATP to form Tyr-AMP and then transferred to the acceptor end of tRNA(Tyr). This is Tyrosine--tRNA ligase from Yersinia pseudotuberculosis serotype O:1b (strain IP 31758).